The sequence spans 675 residues: Methionine--tRNA ligase (675 aa).

The short motif at 15–25 (PYANGSIHLGH) is the 'HIGH' region element. Zn(2+) is bound by residues Cys146, Cys149, Cys159, and Cys162. A 'KMSKS' region motif is present at residues 332–336 (KMSKS). Lys335 is an ATP binding site. One can recognise a tRNA-binding domain in the interval 573-675 (DFAKIDMRIA…SGAKPGHQVK (103 aa)).

This sequence belongs to the class-I aminoacyl-tRNA synthetase family. MetG type 1 subfamily. As to quaternary structure, homodimer. Zn(2+) serves as cofactor.

It is found in the cytoplasm. It carries out the reaction tRNA(Met) + L-methionine + ATP = L-methionyl-tRNA(Met) + AMP + diphosphate. Its function is as follows. Is required not only for elongation of protein synthesis but also for the initiation of all mRNA translation through initiator tRNA(fMet) aminoacylation. This Proteus mirabilis (strain HI4320) protein is Methionine--tRNA ligase.